Reading from the N-terminus, the 188-residue chain is Protein GrpE (188 aa).

The segment covering 1–22 has biased composition (low complexity); that stretch reads MEENKQNQNLNTEETTEQQTEA. The tract at residues 1 to 26 is disordered; it reads MEENKQNQNLNTEETTEQQTEAETVE.

It belongs to the GrpE family. As to quaternary structure, homodimer.

The protein localises to the cytoplasm. In terms of biological role, participates actively in the response to hyperosmotic and heat shock by preventing the aggregation of stress-denatured proteins, in association with DnaK and GrpE. It is the nucleotide exchange factor for DnaK and may function as a thermosensor. Unfolded proteins bind initially to DnaJ; upon interaction with the DnaJ-bound protein, DnaK hydrolyzes its bound ATP, resulting in the formation of a stable complex. GrpE releases ADP from DnaK; ATP binding to DnaK triggers the release of the substrate protein, thus completing the reaction cycle. Several rounds of ATP-dependent interactions between DnaJ, DnaK and GrpE are required for fully efficient folding. This chain is Protein GrpE, found in Exiguobacterium sibiricum (strain DSM 17290 / CCUG 55495 / CIP 109462 / JCM 13490 / 255-15).